Here is a 711-residue protein sequence, read N- to C-terminus: Dendrin (711 aa).

4 disordered regions span residues 1–22 (MLDG…DEES), 49–273 (APSR…KKRL), 324–446 (DLNS…SQGL), and 479–677 (PSGV…AELS). Positions 75 to 84 (PGSPQPPPRR) are enriched in pro residues. Residues 102 to 134 (LAEVRAREQEKRKAASQEREAKETERKRRKAGG) adopt a coiled-coil conformation. Residues 105 to 127 (VRAREQEKRKAASQEREAKETER) are compositionally biased toward basic and acidic residues. The nuclear localization stretch occupies residues 113-131 (RKAASQEREAKETERKRRK). A compositionally biased stretch (low complexity) spans 150–161 (APRVAQLAGLPA). Residues 186 to 236 (GSAWAGPWGGRRPGPPSYEAHLLLRGSAGTAPRRRWDRPPPYVAPPSYEGP) form an interaction with MAGI2 region. Low complexity-rich tracts occupy residues 252-262 (PTSSAPAATPA) and 346-356 (APAGSATAAPC). The interval 341 to 436 (AGTEIAPAGS…LEGWKATRRA (96 aa)) is interaction with ACTN1. A Phosphoserine modification is found at S389. Residues 408-709 (GGTGWRESLG…IRGTQQGNRK (302 aa)) form an interaction with CD2AP and NPHS1 region. Over residues 529-546 (GEAEGGRPGDSTLEERTF) the composition is skewed to basic and acidic residues.

As to quaternary structure, forms a ternary complex with MAGI2 and SH3KBP1; recruits DDN to the cytoplasm. Interacts with MAGI1. Interacts with ACTN1 and may interact with WWC1. Interacts with the podocyte slit diaphragm proteins CD2AP, NPHS1 and NPHS2; the interaction with CD2AP and NPHS1 is direct. Specifically expressed in brain and kidney. Expressed in kidney glomerular capillary loops (at protein level).

It is found in the cell projection. Its subcellular location is the dendritic spine membrane. The protein localises to the cytoplasm. It localises to the endoplasmic reticulum membrane. The protein resides in the perikaryon. It is found in the nucleus. Functionally, promotes apoptosis of kidney glomerular podocytes. Podocytes are highly specialized cells essential to the ultrafiltration of blood, resulting in the extraction of urine and the retention of protein. The sequence is that of Dendrin (DDN) from Homo sapiens (Human).